The sequence spans 494 residues: MIHDVVREGRLSGVRSGEVAAFLSSRNADHWIAEADVLVDIAHLLMLYRQGIIEPEPAAAVMDVLLRFSADGVPEEAFDEQFEDIHAGIESLLIAEVGIEQGGRLHIGRSRNDEVATCLRLRLCEELLVIGDAVNGLCEVLVSLAGEHTHSVMPGFTHLQHAQPTTLAHHLLSYAQAFSRDLERLLSTYQRVNRSPLGAAAFASTGYPIDREFTATMLGFSGVLENSMDAVSTRDFALEALADCAILMVNASRCCEELILWSSSLVRFVQLDDAYCSTSSIMPQKKNPDTLEIMRARAGSVIGASTAALSIVKALPMSYNRDLQQLTPHLWEGIGDAGASIRILAGALSTATFNTERMETEAGRGFSTATELADMMVRECGLPFRTAHHIVGRAVRSGSLTLVSLKKAATGESIDLTALGLTEEKVQAALDPVHGIEARSVLGGPAVASVSTAIETLQESVKAGRTAIAEERYRRTTAITTLIKEARRLKTFHQ.

It belongs to the lyase 1 family. Argininosuccinate lyase subfamily.

The protein localises to the cytoplasm. It catalyses the reaction 2-(N(omega)-L-arginino)succinate = fumarate + L-arginine. It participates in amino-acid biosynthesis; L-arginine biosynthesis; L-arginine from L-ornithine and carbamoyl phosphate: step 3/3. The protein is Argininosuccinate lyase of Methanosphaerula palustris (strain ATCC BAA-1556 / DSM 19958 / E1-9c).